Consider the following 504-residue polypeptide: Maturase K (504 aa).

It belongs to the intron maturase 2 family. MatK subfamily.

Its subcellular location is the plastid. The protein localises to the chloroplast. Functionally, usually encoded in the trnK tRNA gene intron. Probably assists in splicing its own and other chloroplast group II introns. This Ochroma pyramidale (Balsa) protein is Maturase K.